The following is a 239-amino-acid chain: Ribosomal RNA small subunit methyltransferase G (239 aa).

S-adenosyl-L-methionine-binding positions include G78, F83, 129-130, and R148; that span reads AE.

Belongs to the methyltransferase superfamily. RNA methyltransferase RsmG family.

The protein localises to the cytoplasm. Its function is as follows. Specifically methylates the N7 position of a guanine in 16S rRNA. This is Ribosomal RNA small subunit methyltransferase G from Clostridium perfringens (strain SM101 / Type A).